We begin with the raw amino-acid sequence, 533 residues long: Intestinal-type alkaline phosphatase (533 aa).

The signal sequence occupies residues 1 to 19; sequence MQGACVLLLLGLHLQLSLG. Asp61 contacts Mg(2+). 2 residues coordinate Zn(2+): Asp61 and Ser111. Ser111 acts as the Phosphoserine intermediate in catalysis. Cys140 and Cys202 are oxidised to a cystine. Ser174 serves as a coordination point for Mg(2+). Residue Glu235 participates in Ca(2+) binding. Asn268 carries an N-linked (GlcNAc...) asparagine glycan. 3 residues coordinate Ca(2+): Phe288, Glu289, and Asp304. A Mg(2+)-binding site is contributed by Glu330. Positions 335, 339, 376, and 377 each coordinate Zn(2+). N-linked (GlcNAc...) asparagine glycosylation is present at Asn429. His451 contributes to the Zn(2+) binding site. Cys486 and Cys493 are joined by a disulfide. The GPI-anchor amidated aspartate moiety is linked to residue Asp506. The propeptide at 507–533 is removed in mature form; that stretch reads AAHLAASPPPLALLAGAMLLLLAPTLY.

This sequence belongs to the alkaline phosphatase family. Homodimer. Mg(2+) is required as a cofactor. Requires Zn(2+) as cofactor. Ca(2+) serves as cofactor.

The protein resides in the cell membrane. It carries out the reaction a phosphate monoester + H2O = an alcohol + phosphate. In terms of biological role, alkaline phosphatase that can hydrolyze various phosphate compounds. In Bos taurus (Bovine), this protein is Intestinal-type alkaline phosphatase (ALPI).